We begin with the raw amino-acid sequence, 284 residues long: Bifunctional protein FolD (284 aa).

NADP(+)-binding positions include 166-168 and isoleucine 232; that span reads GAS.

This sequence belongs to the tetrahydrofolate dehydrogenase/cyclohydrolase family. As to quaternary structure, homodimer.

It catalyses the reaction (6R)-5,10-methylene-5,6,7,8-tetrahydrofolate + NADP(+) = (6R)-5,10-methenyltetrahydrofolate + NADPH. The catalysed reaction is (6R)-5,10-methenyltetrahydrofolate + H2O = (6R)-10-formyltetrahydrofolate + H(+). The protein operates within one-carbon metabolism; tetrahydrofolate interconversion. Catalyzes the oxidation of 5,10-methylenetetrahydrofolate to 5,10-methenyltetrahydrofolate and then the hydrolysis of 5,10-methenyltetrahydrofolate to 10-formyltetrahydrofolate. This is Bifunctional protein FolD from Pseudomonas fluorescens (strain ATCC BAA-477 / NRRL B-23932 / Pf-5).